We begin with the raw amino-acid sequence, 1392 residues long: ABC transporter G family member 42 (1392 aa).

Positions 1–18 (MTMSQTDGVEFASRNTNE) are enriched in polar residues. The segment at 1-26 (MTMSQTDGVEFASRNTNENGHDDDDQ) is disordered. The ABC transporter 1 domain occupies 139-413 (SKLSRFMCSN…FEDCGFKCPN (275 aa)). An ATP-binding site is contributed by 173–180 (GPPSCGKT). The ABC transmembrane type-2 1 domain occupies 491–703 (DMLKACSRRE…AEIGLTANEF (213 aa)). Transmembrane regions (helical) follow at residues 509–529 (FVYVFKSGLLIFIGFIAMTVY), 543–563 (YLMGSLFFSLFKLLADGLPEL), 596–616 (IPISFLESFLWTMLTYYVIGY), 627–647 (FLILFALHLSCISMFRAIAAV), 652–672 (VVATTVGSISIVLLSVFGGFI), and 739–759 (FGALIGFTLFFNTVFALALTF). An ABC transporter 2 domain is found at 800-1045 (FTFQDVQYII…VIEYFMRIHG (246 aa)). 837–844 (GVSGAGKT) is a binding site for ATP. Residues 1117–1331 (EQFKACLWKQ…VLNGLLTSQY (215 aa)) enclose the ABC transmembrane type-2 2 domain. 7 helical membrane-spanning segments follow: residues 1136 to 1156 (YNLTRIIFMSFTCMLCGILFW), 1175 to 1195 (MFTVVLFSGINNCSTVLFSVA), 1215 to 1237 (YSLAQVLVEIPYSLFQSIVYVII), 1255 to 1275 (FYSIFCTLLIFNYFGMLLVVV), 1281 to 1301 (IAFTLRSSFYAIVNLFAGYVM), 1309 to 1329 (WWIWMYYLSPTSWVLNGLLTS), and 1364 to 1384 (LVAVVLIAFPILLASLFAFFI).

The protein belongs to the ABC transporter superfamily. ABCG family. PDR (TC 3.A.1.205) subfamily. As to expression, confined to shoots.

The protein resides in the membrane. Its function is as follows. May be a general defense protein. In Arabidopsis thaliana (Mouse-ear cress), this protein is ABC transporter G family member 42 (ABCG42).